The primary structure comprises 227 residues: Transcription elongation factor A protein-like 2 (227 aa).

Disordered regions lie at residues 1–145 and 202–227; these read MEKL…TNKG and FYPR…IPYV. 5 stretches are compositionally biased toward basic and acidic residues: residues 18 to 43, 50 to 82, 90 to 113, 120 to 136, and 206 to 227; these read IDNE…KLEN, TGKR…KGKS, TEGK…REPE, SETR…DIPR, and GPRE…IPYV.

Belongs to the TFS-II family. TFA subfamily.

It localises to the nucleus. Its function is as follows. May be involved in transcriptional regulation. This Homo sapiens (Human) protein is Transcription elongation factor A protein-like 2 (TCEAL2).